The primary structure comprises 442 residues: Dol-P-Man:Man(5)GlcNAc(2)-PP-Dol alpha-1,3-mannosyltransferase (442 aa).

Residues 1–34 are Lumenal-facing; that stretch reads MAAPSSRPESNPPLYKQALDFALDVANGRHALSK. Residues 35–55 form a helical membrane-spanning segment; the sequence is LIPPALFLVDALLCGLIIWKV. The Cytoplasmic segment spans residues 56–84; sequence PYTEIDWAAYMEQVSQILSGERDYTKVRG. A helical transmembrane segment spans residues 85 to 105; the sequence is GTGPLVYPAAHVYIYTGLYHL. Over 106 to 111 the chain is Lumenal; the sequence is TDEGRN. Residues 112-132 form a helical membrane-spanning segment; sequence ILLAQQLFAGLYMVTLAVVMG. Residues 133–155 are Cytoplasmic-facing; the sequence is CYWQAKAPPYLFPLLTLSKRLHS. The helical transmembrane segment at 156–176 threads the bilayer; that stretch reads IFVLRCFNDCFAVLFLWLAIF. The Lumenal portion of the chain corresponds to 177 to 198; that stretch reads FFQRRNWQAGALLYTLGLGVKM. Residues 199-219 form a helical membrane-spanning segment; that stretch reads TLLLSLPAVGIVLFLGSGSFV. Position 220 (T220) is a topological domain, cytoplasmic. The chain crosses the membrane as a helical span at residues 221 to 241; that stretch reads TLQLVATMGLVQILIGVPFLA. Residues 242–272 lie on the Lumenal side of the membrane; the sequence is HYPTEYLSRAFELSRQFFFKWTVNWRFVGEE. A helical membrane pass occupies residues 273–293; that stretch reads IFLSKGFALTLLALHVLVLGI. Topologically, residues 294 to 333 are cytoplasmic; it reads FITTRWIKPARKSLVQLISPVLLAGKPPLTVPEHRAAARD. A helical transmembrane segment spans residues 334 to 354; it reads VTPRYIMTTILSANAVGLLFA. Residues 355–376 lie on the Lumenal side of the membrane; it reads RSLHYQFYAYVAWSTPFLLWRA. The helical transmembrane segment at 377–397 threads the bilayer; the sequence is GLHPVLVYLLWAVHEWAWNVF. Over 398–401 the chain is Cytoplasmic; sequence PSTP. Residues 402–422 traverse the membrane as a helical segment; it reads ASSAVVVGVLGVTVAGVWFGA. Residues 423–442 lie on the Lumenal side of the membrane; it reads REEWEPGMKSSSKKEEAAMR.

The protein belongs to the glycosyltransferase ALG3 family.

The protein resides in the endoplasmic reticulum membrane. It carries out the reaction an alpha-D-Man-(1-&gt;2)-alpha-D-Man-(1-&gt;2)-alpha-D-Man-(1-&gt;3)-[alpha-D-Man-(1-&gt;6)]-beta-D-Man-(1-&gt;4)-beta-D-GlcNAc-(1-&gt;4)-alpha-D-GlcNAc-diphospho-di-trans,poly-cis-dolichol + a di-trans,poly-cis-dolichyl beta-D-mannosyl phosphate = an alpha-D-Man-(1-&gt;2)-alpha-D-Man-(1-&gt;2)-alpha-D-Man-(1-&gt;3)-[alpha-D-Man-(1-&gt;3)-alpha-D-Man-(1-&gt;6)]-beta-D-Man-(1-&gt;4)-beta-D-GlcNAc-(1-&gt;4)-alpha-D-GlcNAc-diphospho-di-trans,poly-cis-dolichol + a di-trans,poly-cis-dolichyl phosphate + H(+). The protein operates within protein modification; protein glycosylation. Dol-P-Man:Man(5)GlcNAc(2)-PP-Dol alpha-1,3-mannosyltransferase that operates in the biosynthetic pathway of dolichol-linked oligosaccharides, the glycan precursors employed in protein asparagine (N)-glycosylation. The assembly of dolichol-linked oligosaccharides begins on the cytosolic side of the endoplasmic reticulum membrane and finishes in its lumen. The sequential addition of sugars to dolichol pyrophosphate produces dolichol-linked oligosaccharides containing fourteen sugars, including two GlcNAcs, nine mannoses and three glucoses. Once assembled, the oligosaccharide is transferred from the lipid to nascent proteins by oligosaccharyltransferases. In the lumen of the endoplasmic reticulum, adds the first dolichyl beta-D-mannosyl phosphate derived mannose in an alpha-1,3 linkage to Man(5)GlcNAc(2)-PP-dolichol to produce Man(6)GlcNAc(2)-PP-dolichol. The protein is Dol-P-Man:Man(5)GlcNAc(2)-PP-Dol alpha-1,3-mannosyltransferase (alg-3) of Neurospora crassa (strain ATCC 24698 / 74-OR23-1A / CBS 708.71 / DSM 1257 / FGSC 987).